A 92-amino-acid polypeptide reads, in one-letter code: Small ribosomal subunit protein uS19 (92 aa).

The protein belongs to the universal ribosomal protein uS19 family.

Functionally, protein S19 forms a complex with S13 that binds strongly to the 16S ribosomal RNA. The chain is Small ribosomal subunit protein uS19 from Bacillus pumilus (strain SAFR-032).